Consider the following 522-residue polypeptide: E3 ubiquitin-protein ligase TRIM65 (522 aa).

Position 2 is an N-acetylalanine (alanine 2). The segment at 13–52 (CSICLGRYRDPVTLPCGHSFCGNCIQDSWRSCEKSCPECR) adopts an RING-type zinc-finger fold. The B box-type zinc finger occupies 92–134 (SHSARCLRHGRPLEFFCRTEGLCVCSACTVHDCSHHERALLDV). Residues 141–229 (DQLRARVLVT…QRLTDHLRAL (89 aa)) adopt a coiled-coil conformation. A Phosphoserine modification is found at serine 187. The region spanning 316–509 (APVPSAVCPL…LTLCHQPEAT (194 aa)) is the B30.2/SPRY domain.

Belongs to the TRIM/RBCC family. In terms of assembly, homo-multimerizes. Interacts with ARRDC4.

Its subcellular location is the cytoplasm. It carries out the reaction S-ubiquitinyl-[E2 ubiquitin-conjugating enzyme]-L-cysteine + [acceptor protein]-L-lysine = [E2 ubiquitin-conjugating enzyme]-L-cysteine + N(6)-ubiquitinyl-[acceptor protein]-L-lysine.. Its pathway is protein modification; protein ubiquitination. Its function is as follows. E3 ubiquitin ligase that plays a role in several processes including innate immnity, autophagy or inflammation. Negatively regulates miRNAs by modulating the ubiquitination and stability of TNRC6A, a protein involved in RNA-mediated gene silencing by both micro-RNAs (miRNAs) and short interfering RNAs. This ubiquitination results in the suppressed expression of miR-138-5p leading to increased autophagy. Upon enteroviral infection, promotes 'Lys-63'-mediated ubiquitination activation of IFIH1/MDA5 leading to innate signaling cascade. Mechanistically, selectively recognizes MDA5 filaments that occur on dsRNAs. Also plays a role in limitation of inflammation through different mechanisms. First, promotes 'Lys-48'-mediated ubiquitination of VCAM1 leading to its degradation and limitation of LPS-induced lung inflammation. In addition, negatively regulates inflammasome activation by promoting 'lys48'-linked ubiquitination of NLRP3 which is critical for the inhibition of NLRP3 inflammasome activation in resting macrophages. The protein is E3 ubiquitin-protein ligase TRIM65 (Trim65) of Mus musculus (Mouse).